The following is a 368-amino-acid chain: Biglycan (368 aa).

The first 16 residues, 1–16, serve as a signal peptide directing secretion; the sequence is MKVLLLLCSCILVIHA. Positions 17 to 37 are excised as a propeptide; it reads LPFEQRGFWDFSMDDGMAMMK. 2 disulfide bridges follow: Cys-63–Cys-69 and Cys-67–Cys-76. 12 LRR repeats span residues 82–102, 103–126, 127–150, 151–171, 172–195, 196–220, 221–241, 242–265, 266–289, 290–312, 313–342, and 343–368; these read TSIPKNLPKDTTLLDLQNNKI, TEIKKDDFKGLTNLYALVIVNNKI, SKINEKAFEPLQKMQKLYISKNNL, EEIPKNLPKSLVELRIHENKI, KKVPKGVFSGLKNMNCIEMGGNPL, ENGGIEAGAFDGLKLNYLRVSEAKL, SGIPKGLPSTLNELHLDNNKI, QAIEKEDLSQYASLYRLGLGHNNI, RMIENGSLSFMPVLRELHLDNNKL, SKVPPGLPDMKLLQVVYLHSNNI, TQVGVNDFCPIGFGVKRAYYNGISLFNNPV, and PYWEVQPATFRCVTDRLAIQFGNYRK. Residues Asn-270 and Asn-311 are each glycosylated (N-linked (GlcNAc...) asparagine). Residues Cys-321 and Cys-354 are joined by a disulfide bond.

Belongs to the small leucine-rich proteoglycan (SLRP) family. SLRP class I subfamily.

The protein resides in the secreted. It is found in the extracellular space. The protein localises to the extracellular matrix. May be involved in collagen fiber assembly. This chain is Biglycan (bgn), found in Xenopus laevis (African clawed frog).